Here is a 476-residue protein sequence, read N- to C-terminus: Sedoheptulokinase (476 aa).

This sequence belongs to the FGGY kinase family.

The protein resides in the cytoplasm. It carries out the reaction sedoheptulose + ATP = D-sedoheptulose 7-phosphate + ADP + H(+). Functionally, acts as a modulator of macrophage activation through control of glucose metabolism. This is Sedoheptulokinase (Shpk) from Mus musculus (Mouse).